The sequence spans 518 residues: Probable thiamine biosynthetic bifunctional enzyme (518 aa).

The interval 1–229 (MKRQIDYSLY…ATPPCFAQAR (229 aa)) is thiamine-phosphate synthase. Residues 40 to 44 (QHREK) and Asn72 contribute to the 4-amino-2-methyl-5-(diphosphooxymethyl)pyrimidine site. Asp73 and Asp92 together coordinate Mg(2+). Ser111 is a binding site for 4-amino-2-methyl-5-(diphosphooxymethyl)pyrimidine. 137–139 (TNT) lines the 2-[(2R,5Z)-2-carboxy-4-methylthiazol-5(2H)-ylidene]ethyl phosphate pocket. Residue Lys140 participates in 4-amino-2-methyl-5-(diphosphooxymethyl)pyrimidine binding. Residues Gly173 and 199 to 200 (VS) contribute to the 2-[(2R,5Z)-2-carboxy-4-methylthiazol-5(2H)-ylidene]ethyl phosphate site. Residues 230–518 (SSLTTPKDLL…IERAKLEKAE (289 aa)) are hydroxyethylthiazole kinase. Met281 lines the 5-(2-hydroxyethyl)-4-methylthiazole pocket. The ATP site is built by Lys355 and Ser403. Residue Ala430 participates in 5-(2-hydroxyethyl)-4-methylthiazole binding. The active-site Proton acceptor; for hydroxyethylthiazole kinase activity is Cys433.

It in the N-terminal section; belongs to the thiamine-phosphate synthase family. The protein in the C-terminal section; belongs to the Thz kinase family. Mg(2+) serves as cofactor.

The enzyme catalyses 2-[(2R,5Z)-2-carboxy-4-methylthiazol-5(2H)-ylidene]ethyl phosphate + 4-amino-2-methyl-5-(diphosphooxymethyl)pyrimidine + 2 H(+) = thiamine phosphate + CO2 + diphosphate. It catalyses the reaction 2-(2-carboxy-4-methylthiazol-5-yl)ethyl phosphate + 4-amino-2-methyl-5-(diphosphooxymethyl)pyrimidine + 2 H(+) = thiamine phosphate + CO2 + diphosphate. The catalysed reaction is 4-methyl-5-(2-phosphooxyethyl)-thiazole + 4-amino-2-methyl-5-(diphosphooxymethyl)pyrimidine + H(+) = thiamine phosphate + diphosphate. It carries out the reaction 5-(2-hydroxyethyl)-4-methylthiazole + ATP = 4-methyl-5-(2-phosphooxyethyl)-thiazole + ADP + H(+). Its pathway is cofactor biosynthesis; thiamine diphosphate biosynthesis; 4-methyl-5-(2-phosphoethyl)-thiazole from 5-(2-hydroxyethyl)-4-methylthiazole: step 1/1. The protein operates within cofactor biosynthesis; thiamine diphosphate biosynthesis; thiamine phosphate from 4-amino-2-methyl-5-diphosphomethylpyrimidine and 4-methyl-5-(2-phosphoethyl)-thiazole: step 1/1. Functionally, condenses 4-methyl-5-(beta-hydroxyethyl)thiazole monophosphate (THZ-P) and 2-methyl-4-amino-5-hydroxymethyl pyrimidine pyrophosphate (HMP-PP) to form thiamine monophosphate (TMP). The chain is Probable thiamine biosynthetic bifunctional enzyme (thi4) from Schizosaccharomyces pombe (strain 972 / ATCC 24843) (Fission yeast).